Here is a 146-residue protein sequence, read N- to C-terminus: MKLTNYTDYSLRVLIFLAAERPGELSNIKQIAETYSISKNHLMKVIYRLGQLGYVETIRGRGGGIRLGMDPEDINIGEVVRKTEDDFNIVECFDANKNLCVISPVCGLKHVLNEALLAYLAVLDKYTLRDLVKNKEDIMKLLKMKE.

Residues 2–133 enclose the HTH rrf2-type domain; that stretch reads KLTNYTDYSL…DKYTLRDLVK (132 aa). A DNA-binding region (H-T-H motif) is located at residues 28-51; the sequence is IKQIAETYSISKNHLMKVIYRLGQ. C92, C100, and C106 together coordinate [2Fe-2S] cluster.

It depends on [2Fe-2S] cluster as a cofactor.

Functionally, nitric oxide-responsive transcriptional regulator. It represses the expression of flavohemoprotein hmp and the nitrite reductase nasD. Probably plays a role in the up-regulation of the resDE regulon in the presence of nitric oxide. In Bacillus subtilis (strain 168), this protein is HTH-type transcriptional regulator NsrR (nsrR).